The following is a 296-amino-acid chain: Circadian clock oscillator protein KaiA (296 aa).

The segment at 2-133 is psR domain, binds oxidized quinones; that stretch reads ARPGLTIALL…LRQGRADGRS (132 aa). The 151-residue stretch at 2–152 folds into the KaiA N-terminal domain; sequence ARPGLTIALL…KLSRRLQERL (151 aa). Positions 153–161 are flexible linker; the sequence is GYLGVFYKR. The KaiA C-terminal domain maps to 162–270; that stretch reads DPSRFLGSLP…CEMYRRSIPP (109 aa).

In terms of assembly, homodimer. The KaiABC complex composition changes during the circadian cycle to control KaiC phosphorylation. Complexes KaiC(6), KaiA(2-4):KaiC(6), KaiB(6):KaiC(6) and KaiC(6):KaiB(6):KaiA(12) are among the most important forms, many form cooperatively. KaiA and CikA bind to the same region of the KaiB(fs) form and therefore compete.

Key component of the KaiABC oscillator complex, which constitutes the main circadian regulator in cyanobacteria. Complex composition changes during the circadian cycle to control KaiC phosphorylation. KaiA stimulates KaiC autophosphorylation, while KaiB sequesters KaiA, leading to KaiC autodephosphorylation. KaiA binding to the KaiC CII domain during the subjective day yields KaiA(2-4):KaiC(6) complexes which stimulate KaiC autophosphorylation. Phospho-Ser-431 KaiC accumulation triggers binding of KaiB during the subjective night to form the KaiB(6):KaiC(6) complex, leading to changes in the output regulators CikA and SasA. KaiB(6):KaiC(6) formation exposes a site for KaiA binding on KaiB that sequesters KaiA from KaiC's CII domain, making the KaiC(6):KaiB(6):KaiA(12) complex resulting in KaiC autodephosphorylation. Complete dephosphorylation of KaiC leads to dissociation of KaiA(2):KaiB(1), completing 1 cycle of the Kai oscillator. In terms of biological role, binds oxidized quinones via the N-terminal PsR domain, allowing it to sense redox changes and possibly mediate clock input. This is Circadian clock oscillator protein KaiA from Parasynechococcus marenigrum (strain WH8102).